A 271-amino-acid chain; its full sequence is 3-methyl-2-oxobutanoate hydroxymethyltransferase (271 aa).

Positions 51 and 90 each coordinate Mg(2+). 3-methyl-2-oxobutanoate contacts are provided by residues 51–52, D90, and K118; that span reads DS. Position 120 (E120) interacts with Mg(2+). Catalysis depends on E186, which acts as the Proton acceptor.

This sequence belongs to the PanB family. In terms of assembly, homodecamer; pentamer of dimers. Requires Mg(2+) as cofactor.

Its subcellular location is the cytoplasm. The catalysed reaction is 3-methyl-2-oxobutanoate + (6R)-5,10-methylene-5,6,7,8-tetrahydrofolate + H2O = 2-dehydropantoate + (6S)-5,6,7,8-tetrahydrofolate. It participates in cofactor biosynthesis; (R)-pantothenate biosynthesis; (R)-pantoate from 3-methyl-2-oxobutanoate: step 1/2. In terms of biological role, catalyzes the reversible reaction in which hydroxymethyl group from 5,10-methylenetetrahydrofolate is transferred onto alpha-ketoisovalerate to form ketopantoate. The protein is 3-methyl-2-oxobutanoate hydroxymethyltransferase of Xanthomonas campestris pv. campestris (strain 8004).